The following is a 338-amino-acid chain: 1-aminocyclopropane-1-carboxylate deaminase (338 aa).

Lys51 carries the post-translational modification N6-(pyridoxal phosphate)lysine. Ser78 (nucleophile) is an active-site residue.

It belongs to the ACC deaminase/D-cysteine desulfhydrase family. As to quaternary structure, homotrimer. It depends on pyridoxal 5'-phosphate as a cofactor.

The enzyme catalyses 1-aminocyclopropane-1-carboxylate + H2O = 2-oxobutanoate + NH4(+). Catalyzes a cyclopropane ring-opening reaction, the irreversible conversion of 1-aminocyclopropane-1-carboxylate (ACC) to ammonia and alpha-ketobutyrate. Allows growth on ACC as a nitrogen source. In Methylibium petroleiphilum (strain ATCC BAA-1232 / LMG 22953 / PM1), this protein is 1-aminocyclopropane-1-carboxylate deaminase.